The sequence spans 530 residues: Na(+)/H(+) antiporter NhaB (530 aa).

12 helical membrane-spanning segments follow: residues 13–33 (FLGK…VINP), 34–54 (LVFF…EFIF), 90–110 (LVAN…IYFM), 121–141 (ILIG…TAAF), 145–165 (FLDA…FYAI), 205–225 (LLMH…VGEP), 241–261 (FIIR…LTCI), 306–326 (GLIA…VGLI), 351–371 (EEAL…AVII), 393–413 (LALF…VFVG), 455–475 (GQAA…QLSY), and 481–501 (MALP…IFFL).

The protein belongs to the NhaB Na(+)/H(+) (TC 2.A.34) antiporter family.

The protein resides in the cell inner membrane. The enzyme catalyses 2 Na(+)(in) + 3 H(+)(out) = 2 Na(+)(out) + 3 H(+)(in). Na(+)/H(+) antiporter that extrudes sodium in exchange for external protons. This chain is Na(+)/H(+) antiporter NhaB, found in Aliivibrio fischeri (strain ATCC 700601 / ES114) (Vibrio fischeri).